We begin with the raw amino-acid sequence, 489 residues long: Retinoblastoma-binding protein 5 homolog (489 aa).

WD repeat units follow at residues 22-63 (DCIS…KIIS), 64-103 (AHVHPVCSLSWTRNGHKLLSASTDNNVCIWDVLTGELEHK), 147-187 (DSDG…VVAS), 195-234 (SSATAVKSIEFARRGDAFLINTSDRVIRVYDSKEIITLGK), 248-290 (VNKT…KILH), and 292-330 (TKGELLLDVVWHPVRPIIASISSGLVSIWAQNQVENWSA). Positions 451–489 (DVSLPDAPTDETHPLISSKASKDKQQPVGGKKAAGRTKK) are disordered.

Core component of several methyltransferase-containing complexes. Component of the SET1 complex, composed at least of the catalytic subunit Set1, wds/WDR5, Wdr82, Rbbp5, ash2, Cfp1/CXXC1, hcf and Dpy-30L1. Component of the MLL3/4 complex composed at least of the catalytic subunit trr, ash2, Rbbp5, Dpy-30L1, wds, hcf, ptip, Pa1, Utx, Lpt and Ncoa6.

The protein localises to the nucleus. Functionally, component of the SET1 complex that specifically di- and trimethylates 'Lys-4' of histone H3 and of the MLL3/4 complex which also methylates histone H3 'Lys-4'. The chain is Retinoblastoma-binding protein 5 homolog from Drosophila melanogaster (Fruit fly).